We begin with the raw amino-acid sequence, 525 residues long: GMP synthase [glutamine-hydrolyzing] (525 aa).

Positions 8–206 constitute a Glutamine amidotransferase type-1 domain; it reads PLLILDFGSQ…VVDICKASTD (199 aa). The active-site Nucleophile is the Cys85. Catalysis depends on residues His180 and Glu182. Residues 207 to 400 enclose the GMPS ATP-PPase domain; sequence WTPEHIIDEA…LGLPHDMVYR (194 aa). 234-240 serves as a coordination point for ATP; that stretch reads SGGVDSS.

As to quaternary structure, homodimer.

The enzyme catalyses XMP + L-glutamine + ATP + H2O = GMP + L-glutamate + AMP + diphosphate + 2 H(+). Its pathway is purine metabolism; GMP biosynthesis; GMP from XMP (L-Gln route): step 1/1. In terms of biological role, catalyzes the synthesis of GMP from XMP. This chain is GMP synthase [glutamine-hydrolyzing], found in Legionella pneumophila (strain Lens).